Here is a 433-residue protein sequence, read N- to C-terminus: Enolase (433 aa).

Q166 contributes to the (2R)-2-phosphoglycerate binding site. Residue E208 is the Proton donor of the active site. Residues D245, E289, and D316 each coordinate Mg(2+). Residues K341, R370, S371, and K392 each coordinate (2R)-2-phosphoglycerate. K341 acts as the Proton acceptor in catalysis.

The protein belongs to the enolase family. The cofactor is Mg(2+).

The protein localises to the cytoplasm. It is found in the secreted. The protein resides in the cell surface. It catalyses the reaction (2R)-2-phosphoglycerate = phosphoenolpyruvate + H2O. Its pathway is carbohydrate degradation; glycolysis; pyruvate from D-glyceraldehyde 3-phosphate: step 4/5. In terms of biological role, catalyzes the reversible conversion of 2-phosphoglycerate (2-PG) into phosphoenolpyruvate (PEP). It is essential for the degradation of carbohydrates via glycolysis. The sequence is that of Enolase from Acetivibrio thermocellus (strain ATCC 27405 / DSM 1237 / JCM 9322 / NBRC 103400 / NCIMB 10682 / NRRL B-4536 / VPI 7372) (Clostridium thermocellum).